Consider the following 421-residue polypeptide: Probable acid phosphatase (421 aa).

D229 (proton donor) is an active-site residue.

The catalysed reaction is a phosphate monoester + H2O = an alcohol + phosphate. The protein is Probable acid phosphatase of Kluyveromyces lactis (strain ATCC 8585 / CBS 2359 / DSM 70799 / NBRC 1267 / NRRL Y-1140 / WM37) (Yeast).